The sequence spans 566 residues: UvrABC system protein C (566 aa).

The region spanning 16–93 is the GIY-YIG domain; that stretch reads EKPGVYLFKK…IQQYKPRYNV (78 aa). Positions 199-234 constitute a UVR domain; it reads AEVLPKLYEKIEEFSKELMFEKCAHIRDQIIALENL.

The protein belongs to the UvrC family. Interacts with UvrB in an incision complex.

The protein resides in the cytoplasm. Its function is as follows. The UvrABC repair system catalyzes the recognition and processing of DNA lesions. UvrC both incises the 5' and 3' sides of the lesion. The N-terminal half is responsible for the 3' incision and the C-terminal half is responsible for the 5' incision. This chain is UvrABC system protein C, found in Aquifex aeolicus (strain VF5).